The primary structure comprises 282 residues: HTH-type transcriptional activator RhaR (282 aa).

Positions 179-277 (DKLITALANS…GMTPSQWRHL (99 aa)) constitute an HTH araC/xylS-type domain. 2 DNA-binding regions (H-T-H motif) span residues 196-217 (DAFC…RAQT) and 244-267 (VSEI…TRET).

In terms of assembly, binds DNA as a dimer.

It is found in the cytoplasm. Activates expression of the rhaSR operon in response to L-rhamnose. This Salmonella typhi protein is HTH-type transcriptional activator RhaR.